The chain runs to 449 residues: Hyaluronidase-1 (449 aa).

Positions 1–39 (MKPFSPEVSPDPCPATAAHLLRTYTLFLTLLELAQGCRG) are cleaved as a signal peptide. Intrachain disulfides connect Cys-58/Cys-348 and Cys-222/Cys-236. Asn-85 and Asn-114 each carry an N-linked (GlcNAc...) asparagine glycan. Glu-146 functions as the Proton donor in the catalytic mechanism. 3 N-linked (GlcNAc...) asparagine glycosylation sites follow: Asn-231, Asn-252, and Asn-365. 3 cysteine pairs are disulfide-bonded: Cys-373/Cys-384, Cys-378/Cys-433, and Cys-435/Cys-444. The EGF-like domain maps to 433–444 (CRCYRGWSGEWC).

The protein belongs to the glycosyl hydrolase 56 family.

It is found in the secreted. It localises to the lysosome. It catalyses the reaction Random hydrolysis of (1-&gt;4)-linkages between N-acetyl-beta-D-glucosamine and D-glucuronate residues in hyaluronate.. May have a role in promoting tumor progression. May block the TGFB1-enhanced cell growth. Overexpression of HYAL1 suppressed the growth rate of colon carcinoma cell tumors in an experimental model. The polypeptide is Hyaluronidase-1 (Hyal1) (Rattus norvegicus (Rat)).